The sequence spans 1075 residues: Flocculation protein FLO5 (1075 aa).

The first 24 residues, 1–24, serve as a signal peptide directing secretion; that stretch reads MTIAHHCIFLVILAFLALINVASG. Positions 74–249 constitute a PA14 domain; it reads GGQTDISIDY…GTTVSDNFEG (176 aa). N-linked (GlcNAc...) asparagine glycosylation is found at asparagine 135, asparagine 187, asparagine 203, and asparagine 262. The segment at 197–240 is sugar recognition; that stretch reads DGSLPDNITGTVYMYAGYYYPLKVVYSNAVSWGTLPISVELPDG. Tandem repeats lie at residues 278-322, 323-367, 368-412, 413-457, 458-502, 503-547, 548-592, and 593-637. The tract at residues 278–637 is 8 X 45 AA approximate tandem repeats, Thr-rich; sequence TTTEPWTGTF…RTPTTAISSS (360 aa). 4 stretches are compositionally biased toward low complexity: residues 322-345, 367-390, 457-480, and 547-570; these read TTTTEPWTGTFTSTSTEMTTVTGT. 4 disordered regions span residues 322–349, 366–394, 456–484, and 546–574; these read TTTTEPWTGTFTSTSTEMTTVTGTNGQP and ITTTTEPWTGTFTSTSTEMTTVTGTNGQP. Asparagine 663 is a glycosylation site (N-linked (GlcNAc...) asparagine). 2 tandem repeats follow at residues 667–686 and 687–706. The segment at 667 to 706 is 2 X 20 AA approximate tandem repeats, Ser-rich; sequence VISSSVISSSVTSSLVTSSSFISSSVISSSTTTSTSIFSE. Over residues 702–762 the composition is skewed to low complexity; that stretch reads SIFSESSTSS…SLPPVTSATT (61 aa). Residues 702–781 are disordered; it reads SIFSESSTSS…PATTTKTSEQ (80 aa). The N-linked (GlcNAc...) asparagine glycan is linked to asparagine 749. Positions 763 to 781 are enriched in polar residues; the sequence is GQETASSLPPATTTKTSEQ. Repeat copies occupy residues 775-825, 847-897, and 898-948. Positions 775-948 are 3 X 51 AA approximate repeats, Ser/Thr-rich; it reads TTKTSEQTTL…TVYPTWRPQT (174 aa). Residues 948–958 are compositionally biased toward polar residues; it reads TTNEQSVSSKM. Disordered stretches follow at residues 948–980 and 1016–1038; these read TTNEQSVSSKMNSATSETTTNTGAAETKTAVTS and SLTSSGLSTMSQQPRSTPASSMV. 2 stretches are compositionally biased toward low complexity: residues 959–977 and 1016–1026; these read NSATSETTTNTGAAETKTA and SLTSSGLSTMS. Residues 1027 to 1038 show a composition bias toward polar residues; the sequence is QQPRSTPASSMV. Glycine 1052 carries GPI-anchor amidated glycine lipidation. Positions 1053–1075 are cleaved as a propeptide — removed in mature form; it reads SANSLLAGSGLSVFIASLLLAII.

The protein belongs to the flocculin family. In terms of processing, extensively O-glycosylated. Post-translationally, the GPI-anchor is attached to the protein in the endoplasmic reticulum and serves to target the protein to the cell surface. There, the glucosamine-inositol phospholipid moiety is cleaved off and the GPI-modified mannoprotein is covalently attached via its lipidless GPI glycan remnant to the 1,6-beta-glucan of the outer cell wall layer.

The protein resides in the secreted. Its subcellular location is the cell wall. It localises to the membrane. In terms of biological role, cell wall protein that participates directly in adhesive cell-cell interactions during yeast flocculation, a reversible, asexual and Ca(2+)-dependent process in which cells adhere to form aggregates (flocs) consisting of thousands of cells. The lectin-like protein sticks out of the cell wall of flocculent cells and selectively binds mannose residues in the cell walls of adjacent cells. Activity is inhibited by mannose, but not by glucose, maltose, sucrose or galactose. The protein is Flocculation protein FLO5 (FLO5) of Saccharomyces cerevisiae (strain ATCC 204508 / S288c) (Baker's yeast).